A 40-amino-acid chain; its full sequence is Dolichyl-diphosphooligosaccharide--protein glycosyltransferase subunit 4 (40 aa).

Residues 1-4 (MITD) lie on the Lumenal side of the membrane. A helical transmembrane segment spans residues 5–25 (VQLAIFSNVLGVFLFLLVVAY). Residues 26 to 40 (HYINANTGKIGPKAK) lie on the Cytoplasmic side of the membrane.

The protein belongs to the OST4 family. As to quaternary structure, component of the oligosaccharyltransferase (OST) complex.

It localises to the endoplasmic reticulum membrane. Its function is as follows. Subunit of the oligosaccharyl transferase (OST) complex that catalyzes the initial transfer of a defined glycan (Glc(3)Man(9)GlcNAc(2) in eukaryotes) from the lipid carrier dolichol-pyrophosphate to an asparagine residue within an Asn-X-Ser/Thr consensus motif in nascent polypeptide chains, the first step in protein N-glycosylation. N-glycosylation occurs cotranslationally and the complex associates with the Sec61 complex at the channel-forming translocon complex that mediates protein translocation across the endoplasmic reticulum (ER). All subunits are required for a maximal enzyme activity. The sequence is that of Dolichyl-diphosphooligosaccharide--protein glycosyltransferase subunit 4 from Drosophila willistoni (Fruit fly).